We begin with the raw amino-acid sequence, 103 residues long: Large ribosomal subunit protein bL21 (103 aa).

The protein belongs to the bacterial ribosomal protein bL21 family. As to quaternary structure, part of the 50S ribosomal subunit. Contacts protein L20.

Functionally, this protein binds to 23S rRNA in the presence of protein L20. In Caldicellulosiruptor saccharolyticus (strain ATCC 43494 / DSM 8903 / Tp8T 6331), this protein is Large ribosomal subunit protein bL21.